The chain runs to 223 residues: Ubiquitin carboxyl-terminal hydrolase isozyme L1 (223 aa).

Residue M1 is modified to N-acetylmethionine. The UCH catalytic domain maps to 2-221 (QLKPMEINPE…VRFSAVALCK (220 aa)). An interaction with ubiquitin region spans residues 5-10 (PMEINP). Catalysis depends on C90, which acts as the Nucleophile. S125 is subject to Phosphoserine. H161 acts as the Proton donor in catalysis. The interaction with ubiquitin stretch occupies residues 211–216 (EVRFSA). C220 carries S-farnesyl cysteine lipidation. Residues 221-223 (KAA) constitute a propeptide, removed in mature form.

The protein belongs to the peptidase C12 family. As to quaternary structure, monomer. Homodimer. Interacts with COPS5 and SNCA. In terms of processing, O-glycosylated.

The protein resides in the cytoplasm. It is found in the endoplasmic reticulum membrane. The enzyme catalyses Thiol-dependent hydrolysis of ester, thioester, amide, peptide and isopeptide bonds formed by the C-terminal Gly of ubiquitin (a 76-residue protein attached to proteins as an intracellular targeting signal).. Its function is as follows. Ubiquitin-protein hydrolase involved both in the processing of ubiquitin precursors and of ubiquitinated proteins. This enzyme is a thiol protease that recognizes and hydrolyzes a peptide bond at the C-terminal glycine of ubiquitin. Also binds to free monoubiquitin and may prevent its degradation in lysosomes. The homodimer may have ATP-independent ubiquitin ligase activity. The protein is Ubiquitin carboxyl-terminal hydrolase isozyme L1 (UCHL1) of Sus scrofa (Pig).